Here is a 446-residue protein sequence, read N- to C-terminus: Exodeoxyribonuclease 7 large subunit (446 aa).

This sequence belongs to the XseA family. As to quaternary structure, heterooligomer composed of large and small subunits.

Its subcellular location is the cytoplasm. It catalyses the reaction Exonucleolytic cleavage in either 5'- to 3'- or 3'- to 5'-direction to yield nucleoside 5'-phosphates.. Bidirectionally degrades single-stranded DNA into large acid-insoluble oligonucleotides, which are then degraded further into small acid-soluble oligonucleotides. This is Exodeoxyribonuclease 7 large subunit from Vibrio cholerae serotype O1 (strain ATCC 39541 / Classical Ogawa 395 / O395).